The chain runs to 318 residues: Cell surface sensor SHO1 (318 aa).

A disordered region spans residues 1-23 (MPSYGSLHSPSLRKMEHSRGQYG). The Cytoplasmic portion of the chain corresponds to 1-38 (MPSYGSLHSPSLRKMEHSRGQYGGGRKGMSLGNVIGDP). The helical transmembrane segment at 39–59 (FALATISIAGLAWLIAFIASI) threads the bilayer. The Extracellular segment spans residues 60-71 (VAQIQTTQGFPT). The helical transmembrane segment at 72–92 (YTWWTVVFYFFLIPGVFVVVA) threads the bilayer. Over 93–100 (SDTIQTYH) the chain is Cytoplasmic. The chain crosses the membrane as a helical span at residues 101 to 121 (VALVGYMACGLVLTTSSVNGL). Residues 122–130 (VYSTNGAKE) lie on the Extracellular side of the membrane. A helical membrane pass occupies residues 131-151 (AAAAGFILLSMVTIVWIFYFG). Residues 152–318 (SAPSAMPRAY…IAPSNYLILL (167 aa)) lie on the Cytoplasmic side of the membrane. The interval 172-255 (TSNNRQTMTG…AGGAADAEIV (84 aa)) is disordered. Polar residues predominate over residues 190-214 (ETSTSVQPPQMYTSAQLNGFENPSP). Positions 237–250 (GLPKTTTPPAGGAA) are enriched in low complexity. Positions 259 to 318 (EYPYRAKAIYTYEANPDDANEISFSKHEILEVSDVSGRWWQARKETGETGIAPSNYLILL) constitute an SH3 domain.

This sequence belongs to the SHO1 family. As to quaternary structure, forms homooligomers.

It is found in the cell membrane. MSB2 and SHO1 have overlapping functions in recognizing various surface signals for MAPK PMK1 activation and appressorium formation. While MSB2 is critical for sensing surface hydrophobicity and cutin monomers, SHO1 may play a more important role in recognizing rice leaf waxes. The polypeptide is Cell surface sensor SHO1 (Pyricularia oryzae (strain 70-15 / ATCC MYA-4617 / FGSC 8958) (Rice blast fungus)).